Reading from the N-terminus, the 345-residue chain is Uroporphyrinogen decarboxylase (345 aa).

Residues Arg-27–Arg-31, Asp-77, Tyr-152, Ser-207, and His-323 each bind substrate.

Belongs to the uroporphyrinogen decarboxylase family. As to quaternary structure, homodimer.

It is found in the cytoplasm. It carries out the reaction uroporphyrinogen III + 4 H(+) = coproporphyrinogen III + 4 CO2. Its pathway is porphyrin-containing compound metabolism; protoporphyrin-IX biosynthesis; coproporphyrinogen-III from 5-aminolevulinate: step 4/4. Functionally, catalyzes the decarboxylation of four acetate groups of uroporphyrinogen-III to yield coproporphyrinogen-III. This is Uroporphyrinogen decarboxylase from Maricaulis maris (strain MCS10) (Caulobacter maris).